Here is a 635-residue protein sequence, read N- to C-terminus: Probable ethylene response sensor 2 (635 aa).

Helical transmembrane passes span 24-44 (ISDF…IYFV), 59-79 (FGAF…TFAI), and 94-114 (ATAV…PDLL). 2 residues coordinate Cu cation: Cys-66 and His-70. In terms of domain architecture, GAF spans 159–308 (DRHTILRTTL…VVADQVAVAL (150 aa)). The 239-residue stretch at 351–589 (VMNHEMRTPM…MFFVKLGMPE (239 aa)) folds into the Histidine kinase domain. His-354 bears the Phosphohistidine; by autocatalysis mark.

The protein belongs to the ethylene receptor family. Homodimer. The cofactor is Cu cation. In terms of tissue distribution, expressed in anthers and hulls.

The protein localises to the endoplasmic reticulum membrane. The catalysed reaction is ATP + protein L-histidine = ADP + protein N-phospho-L-histidine.. Ethylene receptor related to bacterial two-component regulators. Acts as a negative regulator of ethylene signaling. May play a role in the regulation of flowering by up-regulating GI (GIGANTEA) and RCN1 and regulate starch accumulation by down-regulating the alpha-amylase AMY3D. The polypeptide is Probable ethylene response sensor 2 (Oryza sativa subsp. indica (Rice)).